The chain runs to 20 residues: Cytochrome c oxidase subunit 6A2, mitochondrial (20 aa).

A disordered region spans residues alanine 1–threonine 20.

The protein belongs to the cytochrome c oxidase subunit 6A family. As to quaternary structure, component of the cytochrome c oxidase (complex IV, CIV), a multisubunit enzyme composed of 14 subunits. The complex is composed of a catalytic core of 3 subunits MT-CO1, MT-CO2 and MT-CO3, encoded in the mitochondrial DNA, and 11 supernumerary subunits COX4I, COX5A, COX5B, COX6A, COX6B, COX6C, COX7A, COX7B, COX7C, COX8 and NDUFA4, which are encoded in the nuclear genome. The complex exists as a monomer or a dimer and forms supercomplexes (SCs) in the inner mitochondrial membrane with NADH-ubiquinone oxidoreductase (complex I, CI) and ubiquinol-cytochrome c oxidoreductase (cytochrome b-c1 complex, complex III, CIII), resulting in different assemblies (supercomplex SCI(1)III(2)IV(1) and megacomplex MCI(2)III(2)IV(2)). As to expression, heart specific isoform.

It localises to the mitochondrion inner membrane. The protein operates within energy metabolism; oxidative phosphorylation. Functionally, component of the cytochrome c oxidase, the last enzyme in the mitochondrial electron transport chain which drives oxidative phosphorylation. The respiratory chain contains 3 multisubunit complexes succinate dehydrogenase (complex II, CII), ubiquinol-cytochrome c oxidoreductase (cytochrome b-c1 complex, complex III, CIII) and cytochrome c oxidase (complex IV, CIV), that cooperate to transfer electrons derived from NADH and succinate to molecular oxygen, creating an electrochemical gradient over the inner membrane that drives transmembrane transport and the ATP synthase. Cytochrome c oxidase is the component of the respiratory chain that catalyzes the reduction of oxygen to water. Electrons originating from reduced cytochrome c in the intermembrane space (IMS) are transferred via the dinuclear copper A center (CU(A)) of subunit 2 and heme A of subunit 1 to the active site in subunit 1, a binuclear center (BNC) formed by heme A3 and copper B (CU(B)). The BNC reduces molecular oxygen to 2 water molecules unsing 4 electrons from cytochrome c in the IMS and 4 protons from the mitochondrial matrix. Plays a role in the assembly and stabilization of complex IV. In Canis lupus familiaris (Dog), this protein is Cytochrome c oxidase subunit 6A2, mitochondrial (COX6A2).